Reading from the N-terminus, the 161-residue chain is Putative 4-hydroxy-4-methyl-2-oxoglutarate aldolase (161 aa).

Residues 75–78 (GDML) and R97 each bind substrate. An a divalent metal cation-binding site is contributed by D98.

The protein belongs to the class II aldolase/RraA-like family. As to quaternary structure, homotrimer. A divalent metal cation serves as cofactor.

It carries out the reaction 4-hydroxy-4-methyl-2-oxoglutarate = 2 pyruvate. The catalysed reaction is oxaloacetate + H(+) = pyruvate + CO2. Functionally, catalyzes the aldol cleavage of 4-hydroxy-4-methyl-2-oxoglutarate (HMG) into 2 molecules of pyruvate. Also contains a secondary oxaloacetate (OAA) decarboxylase activity due to the common pyruvate enolate transition state formed following C-C bond cleavage in the retro-aldol and decarboxylation reactions. The sequence is that of Putative 4-hydroxy-4-methyl-2-oxoglutarate aldolase from Marinomonas sp. (strain MWYL1).